The chain runs to 1844 residues: Non-structural replication polyprotein (1844 aa).

One can recognise an Alphavirus-like MT domain in the interval 58-219 (SGLGTSHHPH…NQPSDAHSWL (162 aa)). The interval 571–729 (TAFLPFTPTT…APPTHPLPSS (159 aa)) is disordered. Residues 609–621 (SSPGAQPPTTTAA) are compositionally biased toward low complexity. One can recognise an OTU domain in the interval 728–879 (SSQLLPAPLT…FSPGKRLLGS (152 aa)). One can recognise a Peptidase C21 domain in the interval 730 to 884 (QLLPAPLTND…RLLGSQPSAK (155 aa)). The active-site For protease activity is the C783. Residues 859-887 (DITHTTGPPSHFSPGKRLLGSQPSAKGHP) are disordered. A GPP flap motif is present at residues 865 to 867 (GPP). H869 (for protease activity) is an active-site residue. A (+)RNA virus helicase ATP-binding domain is found at 946–1103 (TGPTPKERII…RLLPYIDMYC (158 aa)). 976-983 (GFAGCGKT) is a binding site for a ribonucleoside 5'-triphosphate. The (+)RNA virus helicase C-terminal domain maps to 1104–1236 (WWSYRIPQCI…SLIIMDRYFP (133 aa)). The 107-residue stretch at 1572–1678 (TPKIANDYTA…DHPLPTRHDW (107 aa)) folds into the RdRp catalytic domain.

The protein belongs to the Tymoviridae non-structural replication polyprotein family. In terms of assembly, interacts with host ubiquitin. In terms of processing, specific enzymatic cleavages by the host yield mature proteins.

It is found in the host chloroplast envelope. The enzyme catalyses Thiol-dependent hydrolysis of ester, thioester, amide, peptide and isopeptide bonds formed by the C-terminal Gly of ubiquitin (a 76-residue protein attached to proteins as an intracellular targeting signal).. It carries out the reaction RNA(n) + a ribonucleoside 5'-triphosphate = RNA(n+1) + diphosphate. Its function is as follows. Acts as a cysteine protease, methyltransferase and deubiquitinase. The cysteine protease activity cleaves the polyprotein giving rise to mature proteins. The protease has the ability to process substrates in trans. The methyltransferase domain is probably involved in viral RNA capping. The deubiquitylating activity counteracts the degradation of the viral polymerase mediated by the host ubiquitin-proteasome system. The polymerase is thus stabilized and infectivity is increased. Favors K63 poly-Ub linkage. RNA-directed RNA polymerase is responsible for the replication and transcription of the genome. This Brassica protein is Non-structural replication polyprotein.